An 805-amino-acid chain; its full sequence is Mitochondrial intermediate peptidase (805 aa).

A mitochondrion-targeting transit peptide spans 1–25; the sequence is MIQPLVKASRPRLWVCSDCLLRRTL. Zn(2+) is bound at residue H578. The active site involves E579. Positions 582 and 585 each coordinate Zn(2+).

This sequence belongs to the peptidase M3 family. Zn(2+) serves as cofactor.

It localises to the mitochondrion matrix. The catalysed reaction is Release of an N-terminal octapeptide as second stage of processing of some proteins imported into the mitochondrion.. Its function is as follows. Cleaves proteins, imported into the mitochondrion, to their mature size. While most mitochondrial precursor proteins are processed to the mature form in one step by mitochondrial processing peptidase (MPP), the sequential cleavage by MIP of an octapeptide after initial processing by MPP is a required step for a subgroup of nuclear-encoded precursor proteins destined for the matrix or the inner membrane. The polypeptide is Mitochondrial intermediate peptidase (oct-1) (Neurospora crassa (strain ATCC 24698 / 74-OR23-1A / CBS 708.71 / DSM 1257 / FGSC 987)).